The following is a 501-amino-acid chain: WD repeat-containing protein wdr-5.3 (501 aa).

Disordered stretches follow at residues 1 to 35, 58 to 85, and 155 to 197; these read MNPE…LESN, PIGV…YQSH, and KSAE…ITKK. Residues 22–35 are compositionally biased toward polar residues; the sequence is PNQQSLQSRMLESN. The segment covering 167–177 has biased composition (polar residues); it reads SITTKPTSTIQ. WD repeat units lie at residues 211–241, 253–283, 295–325, 337–367, 381–410, 422–455, and 467–499; these read GHTK…KVWN, SHQL…KIFD, GHTN…RVWD, AHSD…RVWD, DHAP…KLWD, GHKN…LVWS, and GHTT…RIWR.

Belongs to the WD repeat WDR5/wds family.

In terms of biological role, not required for methylation of histone H3 'Lys-4'. The protein is WD repeat-containing protein wdr-5.3 (wdr-5.3) of Caenorhabditis elegans.